The chain runs to 128 residues: Iron-sulfur cluster insertion protein ErpA (128 aa).

C56, C120, and C122 together coordinate iron-sulfur cluster.

This sequence belongs to the HesB/IscA family. Homodimer. It depends on iron-sulfur cluster as a cofactor.

Its function is as follows. Required for insertion of 4Fe-4S clusters for at least IspG. This Xylella fastidiosa (strain M12) protein is Iron-sulfur cluster insertion protein ErpA.